The primary structure comprises 447 residues: N-succinylarginine dihydrolase (447 aa).

Substrate-binding positions include 19 to 28 (AGLSFGNEAS), Asn-110, and 137 to 138 (HR). Residue Glu-174 is part of the active site. Residue Arg-212 participates in substrate binding. The active site involves His-248. Substrate is bound by residues Asp-250 and Asn-359. The Nucleophile role is filled by Cys-365.

This sequence belongs to the succinylarginine dihydrolase family. In terms of assembly, homodimer.

The enzyme catalyses N(2)-succinyl-L-arginine + 2 H2O + 2 H(+) = N(2)-succinyl-L-ornithine + 2 NH4(+) + CO2. It functions in the pathway amino-acid degradation; L-arginine degradation via AST pathway; L-glutamate and succinate from L-arginine: step 2/5. Catalyzes the hydrolysis of N(2)-succinylarginine into N(2)-succinylornithine, ammonia and CO(2). In Salmonella gallinarum (strain 287/91 / NCTC 13346), this protein is N-succinylarginine dihydrolase.